A 108-amino-acid polypeptide reads, in one-letter code: UPF0060 membrane protein CKO_01576 (108 aa).

The next 4 membrane-spanning stretches (helical) occupy residues 6–26 (LLFF…WLWL), 29–49 (GATA…VWLL), 61–81 (AAYG…VDGV), and 85–105 (LYDW…VAGW).

The protein belongs to the UPF0060 family.

It localises to the cell inner membrane. The polypeptide is UPF0060 membrane protein CKO_01576 (Citrobacter koseri (strain ATCC BAA-895 / CDC 4225-83 / SGSC4696)).